A 428-amino-acid chain; its full sequence is Adenylosuccinate synthetase (428 aa).

Residues 12–18 (GDEGKGK) and 40–42 (GHT) contribute to the GTP site. The Proton acceptor role is filled by Asp-13. Positions 13 and 40 each coordinate Mg(2+). Residues 13–16 (DEGK), 38–41 (NAGH), Thr-130, Arg-144, Gln-225, Thr-240, and Arg-304 contribute to the IMP site. His-41 functions as the Proton donor in the catalytic mechanism. 300-306 (VTTGRAR) serves as a coordination point for substrate. GTP contacts are provided by residues Arg-306, 332–334 (KID), and 414–416 (SVG).

The protein belongs to the adenylosuccinate synthetase family. Homodimer. Requires Mg(2+) as cofactor.

The protein resides in the cytoplasm. The catalysed reaction is IMP + L-aspartate + GTP = N(6)-(1,2-dicarboxyethyl)-AMP + GDP + phosphate + 2 H(+). The protein operates within purine metabolism; AMP biosynthesis via de novo pathway; AMP from IMP: step 1/2. Plays an important role in the de novo pathway of purine nucleotide biosynthesis. Catalyzes the first committed step in the biosynthesis of AMP from IMP. In Clostridium kluyveri (strain ATCC 8527 / DSM 555 / NBRC 12016 / NCIMB 10680 / K1), this protein is Adenylosuccinate synthetase.